The primary structure comprises 917 residues: Thiamine biosynthesis bifunctional protein ThiEC (917 aa).

The tract at residues 1–243 (MSNEYPYASM…EGWKAVRGDK (243 aa)) is thiamine-phosphate synthase. 4-amino-2-methyl-5-(diphosphooxymethyl)pyrimidine-binding positions include 48-52 (QLRAK) and Asp-84. Mg(2+) is bound by residues Asp-85 and Asp-109. Residue Ser-128 coordinates 4-amino-2-methyl-5-(diphosphooxymethyl)pyrimidine. 157-159 (STT) is a 2-[(2R,5Z)-2-carboxy-4-methylthiazol-5(2H)-ylidene]ethyl phosphate binding site. Residue Lys-160 participates in 4-amino-2-methyl-5-(diphosphooxymethyl)pyrimidine binding. Residues Gly-196 and 216–217 (VS) each bind 2-[(2R,5Z)-2-carboxy-4-methylthiazol-5(2H)-ylidene]ethyl phosphate. Residues 256–311 (PATDTQAAQEGAAKPGSEATEKKFTNAKDAKDAQKLAKQQRVDIAARGSKQRDKAH) are disordered. The tract at residues 271-917 (GSEATEKKFT…GGKLYSTAQE (647 aa)) is phosphomethylpyrimidine synthase. Positions 274-290 (ATEKKFTNAKDAKDAQK) are enriched in basic and acidic residues. 5-amino-1-(5-phospho-beta-D-ribosyl)imidazole contacts are provided by residues Asn-487, Met-516, Tyr-545, His-581, 601-603 (SRG), 642-645 (DGLR), and Glu-681. His-685 contacts Zn(2+). Tyr-708 contributes to the 5-amino-1-(5-phospho-beta-D-ribosyl)imidazole binding site. His-749 contributes to the Zn(2+) binding site. The [4Fe-4S] cluster site is built by Cys-829, Cys-832, and Cys-837.

This sequence in the N-terminal section; belongs to the thiamine-phosphate synthase family. The protein in the C-terminal section; belongs to the ThiC family. [4Fe-4S] cluster is required as a cofactor.

The catalysed reaction is 2-[(2R,5Z)-2-carboxy-4-methylthiazol-5(2H)-ylidene]ethyl phosphate + 4-amino-2-methyl-5-(diphosphooxymethyl)pyrimidine + 2 H(+) = thiamine phosphate + CO2 + diphosphate. It carries out the reaction 2-(2-carboxy-4-methylthiazol-5-yl)ethyl phosphate + 4-amino-2-methyl-5-(diphosphooxymethyl)pyrimidine + 2 H(+) = thiamine phosphate + CO2 + diphosphate. It catalyses the reaction 4-methyl-5-(2-phosphooxyethyl)-thiazole + 4-amino-2-methyl-5-(diphosphooxymethyl)pyrimidine + H(+) = thiamine phosphate + diphosphate. The enzyme catalyses 5-amino-1-(5-phospho-beta-D-ribosyl)imidazole + S-adenosyl-L-methionine = 4-amino-2-methyl-5-(phosphooxymethyl)pyrimidine + CO + 5'-deoxyadenosine + formate + L-methionine + 3 H(+). It functions in the pathway cofactor biosynthesis; thiamine diphosphate biosynthesis; thiamine phosphate from 4-amino-2-methyl-5-diphosphomethylpyrimidine and 4-methyl-5-(2-phosphoethyl)-thiazole: step 1/1. Functionally, condenses 4-methyl-5-(beta-hydroxyethyl)thiazole monophosphate (THZ-P) and 2-methyl-4-amino-5-hydroxymethyl pyrimidine pyrophosphate (HMP-PP) to form thiamine monophosphate (TMP). Catalyzes the synthesis of the hydroxymethylpyrimidine phosphate (HMP-P) moiety of thiamine from aminoimidazole ribotide (AIR) in a radical S-adenosyl-L-methionine (SAM)-dependent reaction. This Bifidobacterium longum (strain NCC 2705) protein is Thiamine biosynthesis bifunctional protein ThiEC (thiE/thiC).